We begin with the raw amino-acid sequence, 430 residues long: Protein translocase subunit SecY (430 aa).

10 consecutive transmembrane segments (helical) span residues 18 to 38 (IFFTLAMLVIFKIGTYIPAPG), 68 to 88 (FSIFAMGIVPYITASIVMQLL), 117 to 137 (LAISLAFIQSIGMAFQFNNYL), 147 to 167 (IMSYLLIALVLTAGTAFLIWL), 179 to 199 (GISIIIFAGILSTLPASLIQF), 217 to 237 (VLGLLVSLILLTVGAIYVLEA), 269 to 289 (GVIPVIFAMAFFLLPRTLTLF), 308 to 328 (NVGMVVYIVLIILFTYFYAFV), 368 to 388 (FVGSIFLAVISILPILATKFM), and 389 to 409 (GLPQSIQIGGTSLLIVIGVAI).

The protein belongs to the SecY/SEC61-alpha family. Component of the Sec protein translocase complex. Heterotrimer consisting of SecY, SecE and SecG subunits. The heterotrimers can form oligomers, although 1 heterotrimer is thought to be able to translocate proteins. Interacts with the ribosome. Interacts with SecDF, and other proteins may be involved. Interacts with SecA.

Its subcellular location is the cell membrane. The central subunit of the protein translocation channel SecYEG. Consists of two halves formed by TMs 1-5 and 6-10. These two domains form a lateral gate at the front which open onto the bilayer between TMs 2 and 7, and are clamped together by SecE at the back. The channel is closed by both a pore ring composed of hydrophobic SecY resides and a short helix (helix 2A) on the extracellular side of the membrane which forms a plug. The plug probably moves laterally to allow the channel to open. The ring and the pore may move independently. In Staphylococcus aureus (strain NCTC 8325 / PS 47), this protein is Protein translocase subunit SecY.